A 120-amino-acid polypeptide reads, in one-letter code: Large ribosomal subunit protein bL19 (120 aa).

Belongs to the bacterial ribosomal protein bL19 family.

This protein is located at the 30S-50S ribosomal subunit interface and may play a role in the structure and function of the aminoacyl-tRNA binding site. The sequence is that of Large ribosomal subunit protein bL19 from Geobacillus kaustophilus (strain HTA426).